An 892-amino-acid polypeptide reads, in one-letter code: von Willebrand factor A domain-containing protein 7 (892 aa).

A signal peptide spans 1–27; the sequence is MLPVEVPLSQLGPPVLLLQLLLPPTSA. Asparagine 54 carries an N-linked (GlcNAc...) asparagine glycan. The disordered stretch occupies residues 231-272; it reads YFGTNPPKPPGKCSHGGRFDQSSSQPPRGGINKDSTSPSFSP. Residues 313-495 enclose the VWFA domain; the sequence is ASSLSFVLDT…HIRDVAAVVG (183 aa).

The protein resides in the secreted. This is von Willebrand factor A domain-containing protein 7 (Vwa7) from Rattus norvegicus (Rat).